The primary structure comprises 145 residues: Large ribosomal subunit protein uL24 (145 aa).

The disordered stretch occupies residues 108–145 (EPIQEEQQKTEETKQEIAPEEVEAKEAQDKQEVKENDQ). A compositionally biased stretch (basic and acidic residues) spans 113 to 145 (EQQKTEETKQEIAPEEVEAKEAQDKQEVKENDQ).

Belongs to the universal ribosomal protein uL24 family. As to quaternary structure, part of the 50S ribosomal subunit.

Functionally, one of two assembly initiator proteins, it binds directly to the 5'-end of the 23S rRNA, where it nucleates assembly of the 50S subunit. Its function is as follows. Located at the polypeptide exit tunnel on the outside of the subunit. The protein is Large ribosomal subunit protein uL24 (rpl24) of Thermoplasma volcanium (strain ATCC 51530 / DSM 4299 / JCM 9571 / NBRC 15438 / GSS1).